The chain runs to 161 residues: Small ribosomal subunit protein uS9 (161 aa).

The protein belongs to the universal ribosomal protein uS9 family.

This is Small ribosomal subunit protein uS9 from Rickettsia typhi (strain ATCC VR-144 / Wilmington).